Here is a 611-residue protein sequence, read N- to C-terminus: MFS siderochrome iron transporter C (611 aa).

The interval 1 to 25 (MPFLDHRTGPSYGTIDQMEQHSDDE) is disordered. N-linked (GlcNAc...) asparagine glycosylation is present at asparagine 62. A run of 14 helical transmembrane segments spans residues 71–91 (VIAY…GQTV), 107–127 (LIST…PPMA), 136–156 (FEAF…MAAS), 165–185 (AQIF…VFIA), 194–214 (AFLA…GPTI), 228–248 (YGMW…SLLL), 282–302 (MGGL…LTLA), 313–333 (SIVA…FWES), 353–373 (ALAG…SVQP), 393–413 (VTQT…ILIK), 418–438 (YRAF…LMMV), 449–469 (ILVT…PVQL), 486–506 (MFLT…GAVW), and 560–580 (LLIL…AMED). The disordered stretch occupies residues 592 to 611 (VDPVPAEEGEIEPNRHVKRT).

Belongs to the major facilitator superfamily.

The protein localises to the membrane. Its function is as follows. Major facilitator transporter that contributes to the maintenance of intracellular siderophore ferricrocin (FC) levels. Plays a role in conidiation and confers protection against oxidative stress. Also contributes to fungal virulence in the Galleria mellonella animal model system. Does not appear to play a role in either siderophore export or uptake. This is MFS siderochrome iron transporter C from Aspergillus fumigatus (strain ATCC MYA-4609 / CBS 101355 / FGSC A1100 / Af293) (Neosartorya fumigata).